The sequence spans 126 residues: Cell cycle protein GpsB (126 aa).

A coiled-coil region spans residues 35-72; sequence LDLVIKDYQTYQENIDRLTADNTRLFNKVEELNRQLSA.

This sequence belongs to the GpsB family. As to quaternary structure, forms polymers through the coiled coil domains. Interacts with PBP1, MreC and EzrA.

The protein localises to the cytoplasm. Its function is as follows. Divisome component that associates with the complex late in its assembly, after the Z-ring is formed, and is dependent on DivIC and PBP2B for its recruitment to the divisome. Together with EzrA, is a key component of the system that regulates PBP1 localization during cell cycle progression. Its main role could be the removal of PBP1 from the cell pole after pole maturation is completed. Also contributes to the recruitment of PBP1 to the division complex. Not essential for septum formation. This Latilactobacillus sakei subsp. sakei (strain 23K) (Lactobacillus sakei subsp. sakei) protein is Cell cycle protein GpsB.